A 560-amino-acid polypeptide reads, in one-letter code: Dihydroxy-acid dehydratase (560 aa).

D80 serves as a coordination point for Mg(2+). Position 121 (C121) interacts with [2Fe-2S] cluster. Mg(2+) contacts are provided by D122 and K123. An N6-carboxylysine modification is found at K123. C194 contacts [2Fe-2S] cluster. Residue E447 coordinates Mg(2+). S473 (proton acceptor) is an active-site residue.

This sequence belongs to the IlvD/Edd family. In terms of assembly, homodimer. [2Fe-2S] cluster serves as cofactor. Mg(2+) is required as a cofactor.

It catalyses the reaction (2R)-2,3-dihydroxy-3-methylbutanoate = 3-methyl-2-oxobutanoate + H2O. It carries out the reaction (2R,3R)-2,3-dihydroxy-3-methylpentanoate = (S)-3-methyl-2-oxopentanoate + H2O. The protein operates within amino-acid biosynthesis; L-isoleucine biosynthesis; L-isoleucine from 2-oxobutanoate: step 3/4. It participates in amino-acid biosynthesis; L-valine biosynthesis; L-valine from pyruvate: step 3/4. Functions in the biosynthesis of branched-chain amino acids. Catalyzes the dehydration of (2R,3R)-2,3-dihydroxy-3-methylpentanoate (2,3-dihydroxy-3-methylvalerate) into 2-oxo-3-methylpentanoate (2-oxo-3-methylvalerate) and of (2R)-2,3-dihydroxy-3-methylbutanoate (2,3-dihydroxyisovalerate) into 2-oxo-3-methylbutanoate (2-oxoisovalerate), the penultimate precursor to L-isoleucine and L-valine, respectively. This chain is Dihydroxy-acid dehydratase, found in Chlorobaculum parvum (strain DSM 263 / NCIMB 8327) (Chlorobium vibrioforme subsp. thiosulfatophilum).